Consider the following 194-residue polypeptide: Glycerol-3-phosphate acyltransferase (194 aa).

Helical transmembrane passes span 7-27 (LLMA…YWVC), 59-79 (LTLF…AMLG), 86-106 (GVTA…HFKG), 116-136 (AGLA…AAVV), and 157-177 (AWRL…FILI).

This sequence belongs to the PlsY family. In terms of assembly, probably interacts with PlsX.

It is found in the cell inner membrane. It catalyses the reaction an acyl phosphate + sn-glycerol 3-phosphate = a 1-acyl-sn-glycero-3-phosphate + phosphate. It participates in lipid metabolism; phospholipid metabolism. Its function is as follows. Catalyzes the transfer of an acyl group from acyl-phosphate (acyl-PO(4)) to glycerol-3-phosphate (G3P) to form lysophosphatidic acid (LPA). This enzyme utilizes acyl-phosphate as fatty acyl donor, but not acyl-CoA or acyl-ACP. This Hahella chejuensis (strain KCTC 2396) protein is Glycerol-3-phosphate acyltransferase.